Consider the following 181-residue polypeptide: MVKETIPKEGENIKIQSYKHDGNIHRVWSETTILKGTDHVVIGGNDHTLVTESDGRTWITREPAIVYFHSEYWFNVICMFREDGVYYYCNLSSPFVCDDEALKYIDYDLDVKVYPNGKYHLLDEDEYQQHMQQMNYPKDIDVILRRNVDILQQWIEQKKGPFAPDFIKVWRERYKKLRQKS.

The active-site Proton donor is the R26. Positions 90, 106, 108, 110, 123, and 126 each coordinate Mg(2+).

The protein belongs to the Ntdp family. The cofactor is Mg(2+).

It carries out the reaction a ribonucleoside 5'-triphosphate + H2O = a ribonucleoside 5'-diphosphate + phosphate + H(+). The catalysed reaction is a ribonucleoside 5'-diphosphate + H2O = a ribonucleoside 5'-phosphate + phosphate + H(+). Functionally, has nucleoside phosphatase activity towards nucleoside triphosphates and nucleoside diphosphates. This chain is Nucleoside triphosphate/diphosphate phosphatase, found in Staphylococcus carnosus (strain TM300).